A 295-amino-acid chain; its full sequence is Acetylglutamate kinase (295 aa).

Residues Gly-66–Gly-67, Arg-88, and Asn-193 contribute to the substrate site.

This sequence belongs to the acetylglutamate kinase family. ArgB subfamily.

It is found in the cytoplasm. It carries out the reaction N-acetyl-L-glutamate + ATP = N-acetyl-L-glutamyl 5-phosphate + ADP. It participates in amino-acid biosynthesis; L-arginine biosynthesis; N(2)-acetyl-L-ornithine from L-glutamate: step 2/4. Its function is as follows. Catalyzes the ATP-dependent phosphorylation of N-acetyl-L-glutamate. The sequence is that of Acetylglutamate kinase from Sinorhizobium fredii (strain NBRC 101917 / NGR234).